The primary structure comprises 160 residues: Eosinophil cationic protein (160 aa).

Positions Met-1 to Ala-27 are cleaved as a signal peptide. Residues Arg-28 to Arg-72 are required for nearly all of the bactericidal activity; partially involved in LPS-binding and bacterial membrane depolarization. His-42 functions as the Proton acceptor in the catalytic mechanism. Cystine bridges form between Cys-50/Cys-110, Cys-64/Cys-123, Cys-82/Cys-138, and Cys-89/Cys-98. Residue Tyr-60 is modified to 3'-nitrotyrosine. Lys-65 to Thr-69 contributes to the substrate binding site. Asn-84, Asn-92, and Asn-119 each carry an N-linked (GlcNAc...) asparagine glycan. The active-site Proton donor is His-155.

It belongs to the pancreatic ribonuclease family. As to quaternary structure, interacts with bacterial lipopolysaccharide (LPS) and lipoteichoic acid (LTA). In vitro interacts with and insert into lipid bilayers composed of dioleoyl phosphatidylcholine and dioleoyl phosphatidylglycerol. In vitro, tends to form amyloid-like aggregates at pH 3, but not at pH 5, nor 7.

The protein resides in the secreted. In terms of biological role, cytotoxin and helminthotoxin with low-efficiency ribonuclease activity. Possesses a wide variety of biological activities. Exhibits antibacterial activity, including cytoplasmic membrane depolarization of preferentially Gram-negative, but also Gram-positive strains. Promotes E.coli outer membrane detachment, alteration of the overall cell shape and partial loss of cell content. The polypeptide is Eosinophil cationic protein (RNASE3) (Homo sapiens (Human)).